The chain runs to 558 residues: Membrane transporter D2 (558 aa).

The disordered stretch occupies residues 1 to 28 (MTLKKRSSAPELPTSLDEDEEEDSPQPL). The Cytoplasmic segment spans residues 1–38 (MTLKKRSSAPELPTSLDEDEEEDSPQPLSNTPFFSMKN). A helical transmembrane segment spans residues 39-59 (LIVATPIILTPLLYGYNLGFV). Over 60–152 (GPYSTMYGYA…QVGYSSIQSG (93 aa)) the chain is Extracellular. A helical membrane pass occupies residues 153–173 (VFAGSLVIGSTMGALMGGYLT). Over 174-179 (KRLDYC) the chain is Cytoplasmic. The helical transmembrane segment at 180-200 (KSFLFIGLLSVIGNVLTHVAT) threads the bilayer. The Extracellular segment spans residues 201-204 (GLFH). The chain crosses the membrane as a helical span at residues 205–225 (YWVLFVARIVLGFPLGWQSIT). The Cytoplasmic portion of the chain corresponds to 226–241 (SSHYTDKFAPANHAKT). The chain crosses the membrane as a helical span at residues 242–262 (LGTLFQVSVSTGIFVTSFFGL). At 263–281 (VLGNTIQYDAASNANTMGR) the chain is on the extracellular side. The helical transmembrane segment at 282-302 (MQGLVSVSTLLSIFVVFLPLI) threads the bilayer. The Cytoplasmic portion of the chain corresponds to 303–335 (TKDGYSKSRRGDYEGENSEDASRKAAEEYTMTQ). Residues 336-356 (MIGPILNGVAMGCVTQLTGIN) traverse the membrane as a helical segment. The Extracellular portion of the chain corresponds to 357 to 373 (ANMNFAPTIMSNLGLQP). A helical membrane pass occupies residues 374–394 (LVGNIIVMAWNMLATFCVIPL). Topologically, residues 395 to 402 (SRRFSMRT) are cytoplasmic. The helical transmembrane segment at 403–423 (LFLFCGFVGSLCCVFLGGIPV) threads the bilayer. Topologically, residues 424 to 441 (YPGVTKSDKAISGIAITG) are extracellular. Residues 442–463 (IAIFIALYEMGVGPCFYVLAVD) form a helical membrane-spanning segment. Over 464–478 (VFPESFRPIGSSITV) the chain is Cytoplasmic. The chain crosses the membrane as a helical span at residues 479–499 (GVMFIFNLIINICYPIATEGI). Residues 500–512 (SGGPSGNPNKGQA) are Extracellular-facing. The chain crosses the membrane as a helical span at residues 513-533 (VAFIFFGCIGVVACVIEYFFL). Topologically, residues 534–558 (QPWVEPEAKMTDDLDGAAVPEGKHD) are cytoplasmic.

The protein belongs to the major facilitator superfamily. Sugar transporter (TC 2.A.1.1) family.

It localises to the membrane. In Leishmania donovani, this protein is Membrane transporter D2.